The primary structure comprises 280 residues: UPF0276 protein CC_3255 (280 aa).

It belongs to the UPF0276 family.

The protein is UPF0276 protein CC_3255 of Caulobacter vibrioides (strain ATCC 19089 / CIP 103742 / CB 15) (Caulobacter crescentus).